Here is a 464-residue protein sequence, read N- to C-terminus: Fumarate hydratase class II (464 aa).

Residues 96-98 (SGT), 127-130 (HPND), 137-139 (SSN), and Thr-185 each bind substrate. His-186 serves as the catalytic Proton donor/acceptor. Ser-316 is an active-site residue. Residues Ser-317 and 322–324 (KVN) contribute to the substrate site.

The protein belongs to the class-II fumarase/aspartase family. Fumarase subfamily. In terms of assembly, homotetramer.

It localises to the cytoplasm. The catalysed reaction is (S)-malate = fumarate + H2O. It participates in carbohydrate metabolism; tricarboxylic acid cycle; (S)-malate from fumarate: step 1/1. In terms of biological role, involved in the TCA cycle. Catalyzes the stereospecific interconversion of fumarate to L-malate. The chain is Fumarate hydratase class II from Pseudomonas putida (strain ATCC 47054 / DSM 6125 / CFBP 8728 / NCIMB 11950 / KT2440).